The primary structure comprises 188 residues: GTP cyclohydrolase 1 (188 aa).

Residues C76, H79, and C148 each coordinate Zn(2+).

The protein belongs to the GTP cyclohydrolase I family. In terms of assembly, homomer.

It carries out the reaction GTP + H2O = 7,8-dihydroneopterin 3'-triphosphate + formate + H(+). The protein operates within cofactor biosynthesis; 7,8-dihydroneopterin triphosphate biosynthesis; 7,8-dihydroneopterin triphosphate from GTP: step 1/1. The protein is GTP cyclohydrolase 1 of Pelotomaculum thermopropionicum (strain DSM 13744 / JCM 10971 / SI).